A 283-amino-acid polypeptide reads, in one-letter code: MAGAGLLEIKRRIKSIKNTRKITKAMGLVATSKLRKARQKLTENNQYFSSLDEIARELIGSLNSNNNPLLKPNDNPKKLIILLASDSGLCGGFNGNTAAFVRDNYENNLENIEAVVVGKKGIHYVKKNKISTLAEYVDLGDTPNVGDASTIVNKAVKEFTDGNFGEVSLVYTKFFSPVKQEVVEEKLLPLDLTGEKGKVSFLIEPDEDEIIDSLVSSYLKGKFMNAMFNSKASEQSARMQAMDGATKNADDLLNSLDAKYNRIRQSIITQEISEIVGGAEAQK.

Belongs to the ATPase gamma chain family. F-type ATPases have 2 components, CF(1) - the catalytic core - and CF(0) - the membrane proton channel. CF(1) has five subunits: alpha(3), beta(3), gamma(1), delta(1), epsilon(1). CF(0) has three main subunits: a, b and c.

It is found in the cell membrane. Functionally, produces ATP from ADP in the presence of a proton gradient across the membrane. The gamma chain is believed to be important in regulating ATPase activity and the flow of protons through the CF(0) complex. The protein is ATP synthase gamma chain of Clostridium perfringens (strain ATCC 13124 / DSM 756 / JCM 1290 / NCIMB 6125 / NCTC 8237 / Type A).